The following is a 355-amino-acid chain: Spore germination protein XB (355 aa).

The next 10 membrane-spanning stretches (helical) occupy residues 2 to 24 (VNFFQIALVLIGSTGIINHVIII), 34 to 56 (DSWISIIILSLVYIIWIPCVFIV), 69 to 91 (LMRNYGGFITYPLLSIIVLYLII), 106 to 128 (FYLPETPRILLGVLLSIICFYNI), 135 to 157 (IALTTGILLPVVFLLGFFVMIAN), 180 to 197 (GMIYPAAGFVELIFILFL), 210 to 232 (LIIVGIILAGITLGPTIAAIVEF), 265 to 287 (VYQWLVGVFIRISLVIFLIPDVL), 299 to 321 (ISILLICMVIICILPISDASFYW), and 326 to 348 (VFLPISAIGLFLFSMLLLVFVWV).

Belongs to the amino acid-polyamine-organocation (APC) superfamily. Spore germination protein (SGP) (TC 2.A.3.9) family.

Its subcellular location is the cell membrane. In terms of biological role, may allow B.anthracis to germinate within phagocytic cells and therefore involved in virulence. The chain is Spore germination protein XB (gerXB) from Bacillus anthracis.